Reading from the N-terminus, the 290-residue chain is Chitinase 10 (290 aa).

The signal sequence occupies residues Met-1 to Gly-28. 2 disulfide bridges follow: Cys-70/Cys-132 and Cys-144/Cys-153. Glu-114 functions as the Proton donor in the catalytic mechanism. N-linked (GlcNAc...) asparagine glycans are attached at residues Asn-193 and Asn-234. The cysteines at positions 252 and 284 are disulfide-linked.

Belongs to the glycosyl hydrolase 19 family. Chitinase class I subfamily. In terms of tissue distribution, expressed at low levels in roots, leaves and meristems.

It carries out the reaction Random endo-hydrolysis of N-acetyl-beta-D-glucosaminide (1-&gt;4)-beta-linkages in chitin and chitodextrins.. The sequence is that of Chitinase 10 (Cht10) from Oryza sativa subsp. japonica (Rice).